The sequence spans 160 residues: Ribosomal RNA large subunit methyltransferase H (160 aa).

S-adenosyl-L-methionine-binding positions include Leu76, Gly108, and 127–132 (LGKMTW).

The protein belongs to the RNA methyltransferase RlmH family. In terms of assembly, homodimer.

Its subcellular location is the cytoplasm. It catalyses the reaction pseudouridine(1915) in 23S rRNA + S-adenosyl-L-methionine = N(3)-methylpseudouridine(1915) in 23S rRNA + S-adenosyl-L-homocysteine + H(+). In terms of biological role, specifically methylates the pseudouridine at position 1915 (m3Psi1915) in 23S rRNA. The sequence is that of Ribosomal RNA large subunit methyltransferase H from Rhizobium leguminosarum bv. trifolii (strain WSM2304).